Here is a 480-residue protein sequence, read N- to C-terminus: ATP synthase subunit beta (480 aa).

152–159 (GGAGVGKT) lines the ATP pocket.

This sequence belongs to the ATPase alpha/beta chains family. In terms of assembly, F-type ATPases have 2 components, CF(1) - the catalytic core - and CF(0) - the membrane proton channel. CF(1) has five subunits: alpha(3), beta(3), gamma(1), delta(1), epsilon(1). CF(0) has three main subunits: a(1), b(2) and c(9-12). The alpha and beta chains form an alternating ring which encloses part of the gamma chain. CF(1) is attached to CF(0) by a central stalk formed by the gamma and epsilon chains, while a peripheral stalk is formed by the delta and b chains.

The protein resides in the cell membrane. It catalyses the reaction ATP + H2O + 4 H(+)(in) = ADP + phosphate + 5 H(+)(out). In terms of biological role, produces ATP from ADP in the presence of a proton gradient across the membrane. The catalytic sites are hosted primarily by the beta subunits. This Wolbachia sp. subsp. Brugia malayi (strain TRS) protein is ATP synthase subunit beta.